A 253-amino-acid polypeptide reads, in one-letter code: 3-deoxy-manno-octulosonate cytidylyltransferase (253 aa).

Belongs to the KdsB family.

The protein localises to the cytoplasm. It catalyses the reaction 3-deoxy-alpha-D-manno-oct-2-ulosonate + CTP = CMP-3-deoxy-beta-D-manno-octulosonate + diphosphate. It functions in the pathway nucleotide-sugar biosynthesis; CMP-3-deoxy-D-manno-octulosonate biosynthesis; CMP-3-deoxy-D-manno-octulosonate from 3-deoxy-D-manno-octulosonate and CTP: step 1/1. Its pathway is bacterial outer membrane biogenesis; lipopolysaccharide biosynthesis. Its function is as follows. Activates KDO (a required 8-carbon sugar) for incorporation into bacterial lipopolysaccharide in Gram-negative bacteria. This chain is 3-deoxy-manno-octulosonate cytidylyltransferase, found in Idiomarina loihiensis (strain ATCC BAA-735 / DSM 15497 / L2-TR).